Consider the following 993-residue polypeptide: Desmoglein-3 (993 aa).

The signal sequence occupies residues 1–23; sequence MTWLLFRTSGALAILMVLILVHG. Residues 24–48 constitute a propeptide that is removed on maturation; sequence ELRIETKGQHGEDETAIQGRRRYKR. 4 Cadherin domains span residues 48-156, 157-266, 267-386, and 383-494; these read REWV…APVF, SQSI…FPMF, KESQ…HPAS, and HPAS…CPTV. Topologically, residues 49–617 are extracellular; sequence EWVKFAKPCR…GKRPSGRLGS (569 aa). 2 N-linked (GlcNAc...) asparagine glycosylation sites follow: N109 and N179. N458 and N544 each carry an N-linked (GlcNAc...) asparagine glycan. The helical transmembrane segment at 618 to 638 threads the bilayer; the sequence is AAIGLLLLGLLLLLLAPLLLL. Over 639–993 the chain is Cytoplasmic; it reads TCDYGVGPIG…CTEDPCSRLI (355 aa). The required for interaction with CTNND1 and localization at cell-cell junctions stretch occupies residues 641 to 713; that stretch reads DYGVGPIGGV…NTYAGGTVVE (73 aa). Desmoglein repeat repeat units follow at residues 903–929 and 930–960; these read LSASSSVLQSATSIPNPVQHGSYMVTE and TYSASGSLVQPTTTVLEPLLTQNVTVTERVI.

As to quaternary structure, homodimer. Part of a complex that contains DSG3, PKP1, YAP1 and YWHAG; the complex is required for localization of DSG3 and YAP1 to the cell membrane in keratinocytes. Interacts with PKP2. Interacts with CTNND1; the interaction facilitates DSG3 localization and retention at cell-cell junctions. Interacts with CDH1; the interaction is required for CDH1 localization to developing adherens junctions. Interacts with RAC1; the interaction is required for DSG3 translocation to cell-cell junctions, organization of cortical F-actin bundles and actin anchoring at cell-cell junctions. Interacts with DSC3; the interaction may limit the interaction of DSC3 with p38MAPK family members and therefore repress p38MAPK signaling activation.

It is found in the cell membrane. Its subcellular location is the cell junction. The protein localises to the desmosome. It localises to the cytoplasm. The protein resides in the tight junction. A component of desmosome cell-cell junctions which are required for positive regulation of cellular adhesion. Required for adherens and desmosome junction assembly in response to mechanical force in keratinocytes. Required for desmosome-mediated cell-cell adhesion of cells surrounding the telogen hair club and the basal layer of the outer root sheath epithelium, consequently is essential for the anchoring of telogen hairs in the hair follicle. Required for the maintenance of the epithelial barrier via promoting desmosome-mediated intercellular attachment of suprabasal epithelium to basal cells. May play a role in the protein stability of the desmosome plaque components DSP, JUP, PKP1, PKP2 and PKP3. Required for YAP1 localization at the plasma membrane in keratinocytes in response to mechanical strain, via the formation of an interaction complex composed of DSG3, PKP1 and YWHAG. May also be involved in the positive regulation of YAP1 target gene transcription and as a result cell proliferation. Positively regulates cellular contractility and cell junction formation via organization of cortical F-actin bundles and anchoring of actin to tight junctions, in conjunction with RAC1. The cytoplasmic pool of DSG3 is required for the localization of CDH1 and CTNNB1 at developing adherens junctions, potentially via modulation of SRC activity. Inhibits keratinocyte migration via suppression of p38MAPK signaling, may therefore play a role in moderating wound healing. This Canis lupus familiaris (Dog) protein is Desmoglein-3 (DSG3).